Here is a 551-residue protein sequence, read N- to C-terminus: Putative transport protein NTHI0043 (551 aa).

The next 5 membrane-spanning stretches (helical) occupy residues 4–24 (IAITISLLALVAVIGLWIGHW), 28–48 (GVGLGIGGVLFGGIIVAHFTN), 65–85 (FGLILFVYTIGIQVGPGFFSS), 95–115 (AFAILIIVLGSIAVVLVHKIA), and 157–177 (VSYAMAYPFGICGILLAMWLI). 2 consecutive RCK C-terminal domains span residues 191–275 (RFNA…IIGY) and 277–360 (VDAP…VIGN). 6 helical membrane passes run 370–390 (MLPVFIGIGLGVLVGSIPFYI), 402–424 (AGGPLVVALILARIGTIGKLYWF), 438–458 (IVLFLAVVGLKSGGSFFDTLV), 463–483 (LEWMGYGIFITFIPLMITGIL), 492–512 (YLTICGLLAGSMTDPPALAFA), and 529–549 (VYPLVMFLRIMSPQLLAVLLW).

It belongs to the AAE transporter (TC 2.A.81) family. YidE subfamily.

It is found in the cell membrane. In Haemophilus influenzae (strain 86-028NP), this protein is Putative transport protein NTHI0043.